The following is a 344-amino-acid chain: Phenylalanine--tRNA ligase alpha subunit (344 aa).

Glutamate 258 is a binding site for Mg(2+).

The protein belongs to the class-II aminoacyl-tRNA synthetase family. Phe-tRNA synthetase alpha subunit type 1 subfamily. In terms of assembly, tetramer of two alpha and two beta subunits. Mg(2+) is required as a cofactor.

Its subcellular location is the cytoplasm. The catalysed reaction is tRNA(Phe) + L-phenylalanine + ATP = L-phenylalanyl-tRNA(Phe) + AMP + diphosphate + H(+). The polypeptide is Phenylalanine--tRNA ligase alpha subunit (Thiobacillus denitrificans (strain ATCC 25259 / T1)).